Consider the following 419-residue polypeptide: Gustatory receptor for sugar taste 64c (419 aa).

Residues 1 to 15 (MQQSGQKGTRNTLQH) lie on the Cytoplasmic side of the membrane. Residues 16 to 36 (AIGPVLVIAQFFGVLPVAGVW) form a helical membrane-spanning segment. Residues 37–48 (PSCRPERVRFRW) are Extracellular-facing. Residues 49–69 (ISLSLLAALILFVFSIVDCAL) form a helical membrane-spanning segment. At 70–82 (SSKVVFDHGLKIY) the chain is on the cytoplasmic side. The helical transmembrane segment at 83-103 (TIGSLSFSVICIFCFGVFLLL) threads the bilayer. At 104-139 (SRRWPYIIRRTAECEQIFLEPEYDCSYGRGYSSRLR) the chain is on the extracellular side. A helical transmembrane segment spans residues 140–160 (LWGVCMLVAALCEHSTYVGSA). The Cytoplasmic portion of the chain corresponds to 161 to 204 (LYNNHLAIVECKLDANFWQNYFQRERQQLFLIMHFTAWWIPFIE). Residues 205 to 225 (WTTLSMTFVWNFVDIFLILIC) traverse the membrane as a helical segment. Over 226–305 (RGMQMRFQQM…FQSKGNYADE (80 aa)) the chain is Extracellular. A helical membrane pass occupies residues 306–326 (LYFWFCLSYVIIRVLNMMFAA). The Cytoplasmic segment spans residues 327 to 377 (SSIPQEAKEISYTLYEIPTEFWCVELRRLNEIFLSDHFALSGKGYFLLTRR). Residues 378 to 398 (LIFAMAATLMVYELVLINQMA) traverse the membrane as a helical segment. At 399–419 (GSEVQKSFCEGGVGSSKSIFS) the chain is on the extracellular side.

Belongs to the insect chemoreceptor superfamily. Gustatory receptor (GR) family. Gr5a subfamily. In terms of tissue distribution, expressed in Gr5a-expressing sugar-sensing cells.

It localises to the cell membrane. One of the few identified sugar gustatory receptors identified so far and which promotes the starvation-induced increase of feeding motivation. The polypeptide is Gustatory receptor for sugar taste 64c (Gr64c) (Drosophila melanogaster (Fruit fly)).